The primary structure comprises 409 residues: Epoxyqueuosine reductase (409 aa).

The disordered stretch occupies residues 1 to 23 (MDRNPELAIADARPSQDGRAAPS). Asp-178 acts as the Proton donor in catalysis. The 30-residue stretch at 232–261 (AAPETPGAHCGSCTRCLGACPTGAIVAPYR) folds into the 4Fe-4S ferredoxin-type domain. 8 residues coordinate [4Fe-4S] cluster: Cys-241, Cys-244, Cys-247, Cys-251, Cys-267, Cys-294, Cys-297, and Cys-301.

The protein belongs to the QueG family. In terms of assembly, monomer. Cob(II)alamin is required as a cofactor. Requires [4Fe-4S] cluster as cofactor.

The protein resides in the cytoplasm. The catalysed reaction is epoxyqueuosine(34) in tRNA + AH2 = queuosine(34) in tRNA + A + H2O. Its pathway is tRNA modification; tRNA-queuosine biosynthesis. Functionally, catalyzes the conversion of epoxyqueuosine (oQ) to queuosine (Q), which is a hypermodified base found in the wobble positions of tRNA(Asp), tRNA(Asn), tRNA(His) and tRNA(Tyr). In Burkholderia pseudomallei (strain K96243), this protein is Epoxyqueuosine reductase.